A 196-amino-acid chain; its full sequence is Imidazoleglycerol-phosphate dehydratase (196 aa).

Belongs to the imidazoleglycerol-phosphate dehydratase family.

It is found in the cytoplasm. It catalyses the reaction D-erythro-1-(imidazol-4-yl)glycerol 3-phosphate = 3-(imidazol-4-yl)-2-oxopropyl phosphate + H2O. It participates in amino-acid biosynthesis; L-histidine biosynthesis; L-histidine from 5-phospho-alpha-D-ribose 1-diphosphate: step 6/9. The chain is Imidazoleglycerol-phosphate dehydratase from Phenylobacterium zucineum (strain HLK1).